A 359-amino-acid chain; its full sequence is DNA polymerase IV (359 aa).

One can recognise a UmuC domain in the interval 6–186 (IIHVDMDAFY…LPIEAFWGVG (181 aa)). 2 residues coordinate Mg(2+): aspartate 10 and aspartate 104. The active site involves glutamate 105.

This sequence belongs to the DNA polymerase type-Y family. As to quaternary structure, monomer. It depends on Mg(2+) as a cofactor.

It is found in the cytoplasm. The catalysed reaction is DNA(n) + a 2'-deoxyribonucleoside 5'-triphosphate = DNA(n+1) + diphosphate. Poorly processive, error-prone DNA polymerase involved in untargeted mutagenesis. Copies undamaged DNA at stalled replication forks, which arise in vivo from mismatched or misaligned primer ends. These misaligned primers can be extended by PolIV. Exhibits no 3'-5' exonuclease (proofreading) activity. May be involved in translesional synthesis, in conjunction with the beta clamp from PolIII. The polypeptide is DNA polymerase IV (Akkermansia muciniphila (strain ATCC BAA-835 / DSM 22959 / JCM 33894 / BCRC 81048 / CCUG 64013 / CIP 107961 / Muc)).